The following is a 93-amino-acid chain: WAP four-disulfide core domain protein 13 (93 aa).

The first 22 residues, 1 to 22, serve as a signal peptide directing secretion; the sequence is MKPVLPLQFLVVFCLALQLVPG. Positions 24–73 constitute a WAP; atypical domain; it reads PKQRVLKYILEPPPCISAPENCTHLCTMQEDCEKGFQCCSSFCGIVCSSE. Cystine bridges form between Cys-45/Cys-66, Cys-49/Cys-61, and Cys-55/Cys-70.

Its subcellular location is the secreted. Functionally, putative acid-stable proteinase inhibitor. The chain is WAP four-disulfide core domain protein 13 (WFDC13) from Homo sapiens (Human).